The primary structure comprises 224 residues: F420-dependent NADP reductase (224 aa).

Residues 9-12, 31-32, Lys-36, Val-74, Val-100, and Ala-145 each bind NADP(+); these read TGDQ and SR.

This sequence belongs to the F420-dependent NADP reductase family. Homotetramer.

It carries out the reaction reduced coenzyme F420-(gamma-L-Glu)(n) + NADP(+) = oxidized coenzyme F420-(gamma-L-Glu)(n) + NADPH + 2 H(+). Its function is as follows. Catalyzes the reduction of NADP(+) with F420H(2) via hydride transfer, and the reverse reaction, i.e. the reduction of F420 with NADPH. Probably functions in the regeneration of NADPH required in biosynthetic reactions. The sequence is that of F420-dependent NADP reductase from Methanothermobacter marburgensis (strain ATCC BAA-927 / DSM 2133 / JCM 14651 / NBRC 100331 / OCM 82 / Marburg) (Methanobacterium thermoautotrophicum).